The primary structure comprises 152 residues: Ubiquitin-conjugating enzyme E2 W (152 aa).

Residue methionine 1 forms a Peptide (Met-Gly) (interchain with G-Cter in ubiquitin) linkage. One can recognise a UBC core domain in the interval 4-152 (AATRRLMKEL…TRWWFHDDSV (149 aa)). Cysteine 92 acts as the Glycyl thioester intermediate in catalysis.

The protein belongs to the ubiquitin-conjugating enzyme family.

It catalyses the reaction S-ubiquitinyl-[E1 ubiquitin-activating enzyme]-L-cysteine + [E2 ubiquitin-conjugating enzyme]-L-cysteine = [E1 ubiquitin-activating enzyme]-L-cysteine + S-ubiquitinyl-[E2 ubiquitin-conjugating enzyme]-L-cysteine.. It carries out the reaction S-ubiquitinyl-[E1 ubiquitin-activating enzyme]-L-cysteine + [acceptor protein]-N-terminal-amino acid = [E1 ubiquitin-activating enzyme]-L-cysteine + N-terminal-ubiquitinyl-[acceptor protein].. It functions in the pathway protein modification; protein ubiquitination. Accepts ubiquitin from the E1 complex and catalyzes its covalent attachment to other proteins. Together with ubc-18, required for the ubiquitination of membranous organelles, and the removal of paternal mitochondria from early embryos. The protein is Ubiquitin-conjugating enzyme E2 W of Caenorhabditis elegans.